A 283-amino-acid polypeptide reads, in one-letter code: Acetyl-coenzyme A carboxylase carboxyl transferase subunit beta (283 aa).

The CoA carboxyltransferase N-terminal domain occupies 29–283; that stretch reads LWISCPKCQQ…VKIHSMKGAF (255 aa). Zn(2+) is bound by residues C33, C36, C51, and C54. The segment at 33-54 adopts a C4-type zinc-finger fold; it reads CPKCQQSIYHKDLGKYKTCPNC.

This sequence belongs to the AccD/PCCB family. In terms of assembly, acetyl-CoA carboxylase is a heterohexamer composed of biotin carboxyl carrier protein (AccB), biotin carboxylase (AccC) and two subunits each of ACCase subunit alpha (AccA) and ACCase subunit beta (AccD). The cofactor is Zn(2+).

It is found in the cytoplasm. The catalysed reaction is N(6)-carboxybiotinyl-L-lysyl-[protein] + acetyl-CoA = N(6)-biotinyl-L-lysyl-[protein] + malonyl-CoA. Its pathway is lipid metabolism; malonyl-CoA biosynthesis; malonyl-CoA from acetyl-CoA: step 1/1. In terms of biological role, component of the acetyl coenzyme A carboxylase (ACC) complex. Biotin carboxylase (BC) catalyzes the carboxylation of biotin on its carrier protein (BCCP) and then the CO(2) group is transferred by the transcarboxylase to acetyl-CoA to form malonyl-CoA. This Ligilactobacillus salivarius (strain UCC118) (Lactobacillus salivarius) protein is Acetyl-coenzyme A carboxylase carboxyl transferase subunit beta.